A 225-amino-acid chain; its full sequence is uncharacterized protein (225 aa).

4 consecutive transmembrane segments (helical) span residues 40–60 (LISL…LSIV), 63–83 (LAFF…PFSF), 151–171 (LSET…LTIL), and 176–196 (IFSL…IVSL).

Its subcellular location is the membrane. This is an uncharacterized protein from Saccharomyces cerevisiae (strain ATCC 204508 / S288c) (Baker's yeast).